The chain runs to 154 residues: Deoxyuridine 5'-triphosphate nucleotidohydrolase (154 aa).

Substrate-binding positions include 64-66 (RSG), asparagine 77, 81-83 (TID), and lysine 91.

This sequence belongs to the dUTPase family. As to quaternary structure, homotrimer. Requires Mg(2+) as cofactor.

The catalysed reaction is dUTP + H2O = dUMP + diphosphate + H(+). It functions in the pathway pyrimidine metabolism; dUMP biosynthesis; dUMP from dCTP (dUTP route): step 2/2. Its function is as follows. This enzyme is involved in nucleotide metabolism: it produces dUMP, the immediate precursor of thymidine nucleotides and it decreases the intracellular concentration of dUTP so that uracil cannot be incorporated into DNA. The protein is Deoxyuridine 5'-triphosphate nucleotidohydrolase of Mycobacterium sp. (strain JLS).